Reading from the N-terminus, the 488-residue chain is RuvB-like helicase 1 (488 aa).

Residues 1–11 show a composition bias toward polar residues; sequence MATANTSSGSM. Residues 1–29 are disordered; that stretch reads MATANTSSGSMNGVGPVTMDSSTSGASRE. 87-94 is an ATP binding site; sequence GGPGTGKT.

Belongs to the RuvB family. May form heterododecamers with RVB2. Component of the SWR1 chromatin remodeling complex, the INO80 chromatin remodeling complex, and of the R2TP complex.

The protein resides in the nucleus. The enzyme catalyses ATP + H2O = ADP + phosphate + H(+). Its function is as follows. DNA helicase which participates in several chromatin remodeling complexes, including the SWR1 and the INO80 complexes. The SWR1 complex mediates the ATP-dependent exchange of histone H2A for the H2A variant HZT1 leading to transcriptional regulation of selected genes by chromatin remodeling. The INO80 complex remodels chromatin by shifting nucleosomes and is involved in DNA repair. Also involved in pre-rRNA processing. The chain is RuvB-like helicase 1 (RVB1) from Mycosarcoma maydis (Corn smut fungus).